Here is a 316-residue protein sequence, read N- to C-terminus: Very long chain fatty acid elongase 6 (316 aa).

Residue Asn11 is glycosylated (N-linked (GlcNAc...) asparagine). 6 helical membrane-spanning segments follow: residues 30–50 (WMLE…LVIF), 64–84 (LRGP…MGAA), 117–137 (FWTW…IFIV), 142–162 (PLIF…WFSY), 167–189 (SSAR…YYAL), and 202–222 (MIIT…NVWA). Asn242 carries N-linked (GlcNAc...) asparagine glycosylation. The helical transmembrane segment at 245-265 (IAMYSSYFVLFARFFYKAYLA) threads the bilayer.

This sequence belongs to the ELO family. ELOVL6 subfamily. Detected in the CNS (central nervous system) of third larval instar (at protein level). Expressed in cyst progenitor cells (at protein level). In the adult fly, expressed in several tissues including, sperm, follicular epithelium, nurse cells and cyst cells.

It localises to the mitochondrion outer membrane. The protein localises to the endoplasmic reticulum membrane. The enzyme catalyses a very-long-chain acyl-CoA + malonyl-CoA + H(+) = a very-long-chain 3-oxoacyl-CoA + CO2 + CoA. It carries out the reaction hexadecanoyl-CoA + malonyl-CoA + H(+) = 3-oxooctadecanoyl-CoA + CO2 + CoA. It functions in the pathway lipid metabolism; fatty acid biosynthesis. Functionally, catalyzes the first and rate-limiting reaction of the four reactions that constitute the long-chain fatty acids elongation cycle. This process allows the addition of 2 carbons to the chain of long- and very long-chain fatty acids (VLCFAs) per cycle. Condensing enzyme that elongates fatty acids with 12, 14 and 16 carbons with higher activity toward C16:0 acyl-CoAs. Catalyzes the synthesis of unsaturated C16 long chain fatty acids and, to a lesser extent, C18:0 and those with low desaturation degree. May participate in the production of saturated and monounsaturated VLCFAs of different chain lengths that are involved in multiple biological processes as precursors of membrane lipids and lipid mediators. This Drosophila melanogaster (Fruit fly) protein is Very long chain fatty acid elongase 6.